Here is a 221-residue protein sequence, read N- to C-terminus: CASP-like protein 4B1 (221 aa).

Residues 1 to 78 form a disordered region; it reads MAMQLHAASP…HDHHGGGGGG (78 aa). The Cytoplasmic segment spans residues 1-87; that stretch reads MAMQLHAASP…GDEATQLLNG (87 aa). A compositionally biased stretch (pro residues) spans 19–33; the sequence is SPPPPPPLSPHPEPA. A compositionally biased stretch (low complexity) spans 50–62; that stretch reads APVATATTPLTPG. Residues 88–108 traverse the membrane as a helical segment; sequence IVLVLRAGAALLSFVAMALVA. The Extracellular segment spans residues 109–125; it reads SCRHGDWMDFLRYQEYR. A helical transmembrane segment spans residues 126-146; it reads YLLGVSVVAFVYSAAQALKNF. At 147-160 the chain is on the cytoplasmic side; that stretch reads RRRRRGAADASFLD. A helical membrane pass occupies residues 161–181; it reads FAGDQAVAYLLVTASAAALPI. Over 182 to 196 the chain is Extracellular; the sequence is TIRMRSAVVNVFTDA. A helical transmembrane segment spans residues 197 to 217; the sequence is IAASIALGFLAFAALALSAML. The Cytoplasmic portion of the chain corresponds to 218-221; the sequence is SRHA.

This sequence belongs to the Casparian strip membrane proteins (CASP) family. In terms of assembly, homodimer and heterodimers.

Its subcellular location is the cell membrane. The polypeptide is CASP-like protein 4B1 (Hordeum vulgare subsp. vulgare (Domesticated barley)).